The chain runs to 511 residues: Potassium voltage-gated channel subfamily A member 10 (511 aa).

The interval 22–50 is disordered; it reads IQEEPGYATDFDSTSPKGRPGGSSFSNGK. A helical transmembrane segment spans residues 218–238; that stretch reads VAVVSVLVVVISITIFCLETL. Residue Asn256 is glycosylated (N-linked (GlcNAc...) asparagine). A helical transmembrane segment spans residues 271 to 292; sequence FFMVESTCIVWFTFELVLRFVV. A lipid anchor (S-palmitoyl cysteine) is attached at Cys293. A helical transmembrane segment spans residues 303 to 323; sequence IMNIIDIISIIPYFATLITEL. N-linked (GlcNAc...) asparagine glycosylation is present at Asn334. Residues 339–358 traverse the membrane as a helical; Voltage-sensor segment; it reads ILRIIRLVRVFRIFKLSRHS. A helical transmembrane segment spans residues 375-395; it reads LGLLIFFLFIGVILFSSAVYF. The Selectivity filter motif lies at 421–426; it reads TVGYGD. A helical transmembrane segment spans residues 436–456; the sequence is IVGTLCAIAGVLTIALPVPVI. Residues 489 to 511 are disordered; it reads SRMGSTDSLNKTNGGCSTEKSRK. The N-linked (GlcNAc...) asparagine glycan is linked to Asn498.

Belongs to the potassium channel family. A (Shaker) (TC 1.A.1.2) subfamily. Kv1.8/KCNA10 sub-subfamily. Homotetramer. Interacts with KCN4B/POMP. Interaction with KCN4B/POMP is necessary for the modulation of channel activity by cAMP. In terms of tissue distribution, detected in kidney, in proximal tubules, glomerular endothelium, in vascular endothelium and in smooth muscle cells.

It localises to the membrane. It carries out the reaction K(+)(in) = K(+)(out). Its activity is regulated as follows. The channel activity is up-regulated by cAMP. Its function is as follows. Voltage-gated potassium ion channel that mediates K(+) permeability of excitable membranes. When opened in response to the voltage difference across the membrane, KCNA10 channel selectively allows the flow of potassium ions across the membrane down their electrochemical gradient. This Homo sapiens (Human) protein is Potassium voltage-gated channel subfamily A member 10.